The chain runs to 318 residues: Decaprenyl-phosphate phosphoribosyltransferase (318 aa).

Helical transmembrane passes span 33–53 (WIKNLLVLAAPLAAVGSGIEY) and 59–79 (AAKVSVAFVVFCLAASSIYLI). Lys35 and Tyr77 together coordinate 5-phospho-alpha-D-ribose 1-diphosphate. Positions 80 and 84 each coordinate Mg(2+). A 5-phospho-alpha-D-ribose 1-diphosphate-binding site is contributed by Lys94. 2 consecutive transmembrane segments (helical) span residues 99-119 (IAAGVVPEWMAYSLAGLLAVA) and 121-141 (LVISWWLTANLAIVMAVYIAV). The 5-phospho-alpha-D-ribose 1-diphosphate site is built by Lys150 and Arg167. Transmembrane regions (helical) follow at residues 153-173 (AVLDICIVSSGFLIRAIAGGV) and 177-197 (IPLSQWFLLVMAFGSLFMAAG). Position 198 (Lys198) interacts with trans,octa-cis-decaprenyl phosphate. The next 3 helical transmembrane spans lie at 225–245 (LRFVWTLSATAMVVCYGLWAF), 262–282 (SWYAVTMIPFTIAILRYAVDI), and 298–318 (RVLQILFLAWIGTIGAAIYFS).

The protein belongs to the UbiA prenyltransferase family. DPPR synthase subfamily. Mg(2+) serves as cofactor.

Its subcellular location is the cell inner membrane. The enzyme catalyses trans,octa-cis-decaprenyl phosphate + 5-phospho-alpha-D-ribose 1-diphosphate + H(+) = trans,octa-cis-decaprenylphospho-beta-D-ribofuranose 5-phosphate + diphosphate. It participates in cell wall biogenesis; cell wall polysaccharide biosynthesis. Its function is as follows. Involved in the biosynthesis of decaprenylphosphoryl arabinose (DPA) a precursor for arabinan synthesis in mycobacterial cell wall biosynthesis. Catalyzes the transfer of a 5-phosphoribosyl residue from phosphoribose diphosphate (PRPP) to decaprenyl phosphate (DP) to form decaprenylphosphoryl-5-phosphoribose (DPPR). This is Decaprenyl-phosphate phosphoribosyltransferase from Mycolicibacterium smegmatis (strain ATCC 700084 / mc(2)155) (Mycobacterium smegmatis).